A 20-amino-acid polypeptide reads, in one-letter code: Phospholipase A2 II-5b (20 aa).

This sequence belongs to the phospholipase A2 family. Group I subfamily. Requires Ca(2+) as cofactor. As to expression, expressed by the venom gland.

Its subcellular location is the secreted. It carries out the reaction a 1,2-diacyl-sn-glycero-3-phosphocholine + H2O = a 1-acyl-sn-glycero-3-phosphocholine + a fatty acid + H(+). Its function is as follows. Snake venom phospholipase A2 (PLA2) that exhibits weak enzymatic activity. PLA2 catalyzes the calcium-dependent hydrolysis of the 2-acyl groups in 3-sn-phosphoglycerides. The sequence is that of Phospholipase A2 II-5b from Notechis scutatus scutatus (Mainland tiger snake).